Here is a 1822-residue protein sequence, read N- to C-terminus: Integrin beta-4 (1822 aa).

The first 27 residues, 1-27, serve as a signal peptide directing secretion; sequence MAGPRPSPWARLLLAALISVSLSGTLA. Residues 28–710 are Extracellular-facing; the sequence is NRCKKAPVKS…HKKKDCPPGS (683 aa). The region spanning 29-73 is the PSI domain; that stretch reads RCKKAPVKSCTECVRVDKDCAYCTDEMFRDRRCNTQAELLAAGCQ. 8 disulfides stabilise this stretch: Cys30–Cys48, Cys38–Cys455, Cys41–Cys61, Cys51–Cys72, Cys245–Cys288, Cys457–Cys476, Cys468–Cys479, and Cys481–Cys490. The VWFA domain maps to 131–329; sequence DLYILMDFSN…IPIFAVTNYS (199 aa). Residues Ser139 and Ser141 each coordinate Mg(2+). The Ca(2+) site is built by Ser141, Asp144, Asp145, and Asp176. An involved in NRG1- and IGF1-binding region spans residues 194–199; the sequence is WPNSDP. Residues Asn228, Asp230, Pro232, and Glu233 each contribute to the Ca(2+) site. Glu233 serves as a coordination point for Mg(2+). Asn327 carries an N-linked (GlcNAc...) asparagine glycan. Glu350 is a Ca(2+) binding site. 4 I-EGF domains span residues 457-491, 492-537, 538-574, and 575-615; these read CELQ…QTCN, CSTG…QFCE, YDNF…PSCD, and CPLS…TICE. The N-linked (GlcNAc...) asparagine glycan is linked to Asn491. Cystine bridges form between Cys492–Cys520, Cys503–Cys518, Cys512–Cys523, Cys525–Cys536, Cys543–Cys557, Cys551–Cys562, Cys564–Cys573, Cys575–Cys598, Cys582–Cys596, Cys590–Cys601, and Cys603–Cys614. N-linked (GlcNAc...) asparagine glycosylation occurs at Asn579. The N-linked (GlcNAc...) asparagine glycan is linked to Asn617. 4 disulfides stabilise this stretch: Cys626–Cys671, Cys632–Cys651, Cys635–Cys648, and Cys680–Cys706. Asn695 carries N-linked (GlcNAc...) asparagine glycosylation. Residues 711–733 traverse the membrane as a helical segment; it reads FWWLIPLLLLLLPLLALLLLLCW. The palmitoylated on several cysteines stretch occupies residues 732 to 749; that stretch reads CWKYCACCKACLALLPCC. Topologically, residues 734 to 1822 are cytoplasmic; sequence KYCACCKACL…THMDQQFFQT (1089 aa). Phosphoserine is present on residues Ser771, Ser1069, and Ser1119. The 106-residue stretch at 979 to 1084 folds into the Calx-beta domain; it reads VNITIIKEQA…QVRRFHVQLS (106 aa). Residues 1113-1140 are disordered; the sequence is TSQMLSSQPPPHGDLGAPQNPNAKAAGS. Fibronectin type-III domains are found at residues 1129 to 1218 and 1222 to 1321; these read APQN…THQE and EPGR…TQPK. The disordered stretch occupies residues 1400-1444; sequence LSASSGRSSDAEAPHGPPDDGGAGGKGGSLPRSATPGPPGEHLVN. Positions 1418–1427 are enriched in gly residues; the sequence is DDGGAGGKGG. 3 positions are modified to phosphoserine: Ser1454, Ser1457, and Ser1474. Residue Thr1487 is modified to Phosphothreonine. Ser1494 carries the post-translational modification Phosphoserine. A disordered region spans residues 1495-1525; the sequence is LTRSEHSHSTTLPRDYSTLTSVSSHDSRLTA. A compositionally biased stretch (polar residues) spans 1503-1518; sequence STTLPRDYSTLTSVSS. The residue at position 1530 (Thr1530) is a Phosphothreonine. Fibronectin type-III domains follow at residues 1530–1625 and 1643–1739; these read TPTR…VHPQ and APGP…SQDG. Residue Ser1791 is modified to Phosphoserine.

Belongs to the integrin beta chain family. As to quaternary structure, heterodimer of an alpha and a beta subunit. Beta-4 associates with alpha-6. Interacts (via cytoplasmic region) with COL17A1 (via cytoplasmic region). Interacts (via cytoplasmic region) with DST isoform 3 (via N-terminus). Isoform beta-4a interacts (via cytoplasmic domain) with DST (via N-terminus). Interacts with RAC1. ITGA6:ITGB4 is found in a ternary complex with NRG1 and ERBB3. ITGA6:ITGB4 is found in a ternary complex with IGF1 and IGF1R. ITGA6:ITGB4 interacts with IGF2. Interacts with TMEM268; this interaction prevents ITGB4 degradation. In terms of processing, palmitoylated by DHHC3 at several cysteines of the membrane-proximal region, enhancing stability and cell surface expression. Palmitoylation also promotes secondary association with tertaspanins. As to expression, integrin alpha-6/beta-4 is predominantly expressed by epithelia. Isoform beta-4D is also expressed in colon and placenta. Isoform beta-4E is also expressed in epidermis, lung, duodenum, heart, spleen and stomach.

Its subcellular location is the cell membrane. The protein localises to the cell junction. It localises to the hemidesmosome. Its function is as follows. Integrin alpha-6/beta-4 is a receptor for laminin. Plays a critical structural role in the hemidesmosome of epithelial cells. Is required for the regulation of keratinocyte polarity and motility. ITGA6:ITGB4 binds to NRG1 (via EGF domain) and this binding is essential for NRG1-ERBB signaling. ITGA6:ITGB4 binds to IGF1 and this binding is essential for IGF1 signaling. ITGA6:ITGB4 binds to IGF2 and this binding is essential for IGF2 signaling. This is Integrin beta-4 (ITGB4) from Homo sapiens (Human).